We begin with the raw amino-acid sequence, 195 residues long: GTP cyclohydrolase-2 (195 aa).

Residue 48-52 (RIHSE) participates in GTP binding. 3 residues coordinate Zn(2+): Cys53, Cys64, and Cys66. Residues Gln69, 90-92 (EGR), and Thr112 each bind GTP. The Proton acceptor role is filled by Asp124. Residue Arg126 is the Nucleophile of the active site. Residues Thr147 and Lys152 each contribute to the GTP site.

The protein belongs to the GTP cyclohydrolase II family. Zn(2+) is required as a cofactor.

It carries out the reaction GTP + 4 H2O = 2,5-diamino-6-hydroxy-4-(5-phosphoribosylamino)-pyrimidine + formate + 2 phosphate + 3 H(+). It functions in the pathway cofactor biosynthesis; riboflavin biosynthesis; 5-amino-6-(D-ribitylamino)uracil from GTP: step 1/4. Its function is as follows. Catalyzes the conversion of GTP to 2,5-diamino-6-ribosylamino-4(3H)-pyrimidinone 5'-phosphate (DARP), formate and pyrophosphate. This chain is GTP cyclohydrolase-2, found in Campylobacter fetus subsp. fetus (strain 82-40).